The sequence spans 392 residues: Major outer membrane porin (392 aa).

The first 22 residues, 1 to 22 (MKKLLKSALLFAAAGSALSLQA), serve as a signal peptide directing secretion.

The protein belongs to the chlamydial porin (CP) (TC 1.B.2) family. As to quaternary structure, part of a disulfide cross-linked outer membrane complex (COMC) composed of the major outer membrane porin (MOMP), the small cysteine-rich protein (OmcA) and the large cysteine-rich periplasmic protein (OmcB).

It is found in the cell outer membrane. Its function is as follows. In elementary bodies (EBs, the infectious stage, which is able to survive outside the host cell) provides the structural integrity of the outer envelope through disulfide cross-links with the small cysteine-rich protein and the large cysteine-rich periplasmic protein. It has been described in publications as the Sarkosyl-insoluble COMC (Chlamydia outer membrane complex), and serves as the functional equivalent of peptidoglycan. Functionally, permits diffusion of specific solutes through the outer membrane. The sequence is that of Major outer membrane porin (ompA) from Chlamydia psittaci (Chlamydophila psittaci).